A 342-amino-acid chain; its full sequence is Heat-inducible transcription repressor HrcA (342 aa).

Belongs to the HrcA family.

Functionally, negative regulator of class I heat shock genes (grpE-dnaK-dnaJ and groELS operons). Prevents heat-shock induction of these operons. This Acholeplasma laidlawii protein is Heat-inducible transcription repressor HrcA.